The following is a 706-amino-acid chain: Double-strand break repair protein MRE11 (706 aa).

An N-acetylserine modification is found at serine 2. Serine 2 carries the phosphoserine modification. The Mn(2+) site is built by aspartate 20, histidine 22, and aspartate 60. An interaction with NBN region spans residues 87 to 117; it reads RPVQFEVISDQSVNFGFSKFPWVNYQDGNLN. A Mn(2+)-binding site is contributed by asparagine 128. The active-site Proton donor is histidine 129. The Mn(2+) site is built by histidine 217, histidine 245, and histidine 247. Lysine 255 is covalently cross-linked (Glycyl lysine isopeptide (Lys-Gly) (interchain with G-Cter in SUMO2)). Serine 275 is subject to Phosphoserine. Lysine 282 participates in a covalent cross-link: Glycyl lysine isopeptide (Lys-Gly) (interchain with G-Cter in UFM1). Lysine 339 is covalently cross-linked (Glycyl lysine isopeptide (Lys-Gly) (interchain with G-Cter in ubiquitin)). Glycyl lysine isopeptide (Lys-Gly) (interchain with G-Cter in SUMO) cross-links involve residues lysine 384 and lysine 468. A Glycyl lysine isopeptide (Lys-Gly) (interchain with G-Cter in ubiquitin) cross-link involves residue lysine 481. The span at 505-514 shows a compositional bias: basic and acidic residues; the sequence is FRESRQRNTN. Positions 505–706 are disordered; it reads FRESRQRNTN…SSSCPRRNRR (202 aa). The span at 531–541 shows a compositional bias: polar residues; sequence RSQSETSTSAF. A compositionally biased stretch (basic residues) spans 569-579; the sequence is GRGRGRGRRGA. Residues arginine 570, arginine 572, arginine 574, arginine 576, arginine 577, arginine 580, arginine 587, arginine 592, and arginine 594 each carry the asymmetric dimethylarginine modification. The short motif at 570-594 is the GAR element; sequence RGRGRGRRGARGQSSAPRGGSQRGR. Residues 580-589 are compositionally biased toward low complexity; that stretch reads RGQSSAPRGG. Polar residues predominate over residues 603-617; the sequence is RGRSSKATSSTSRNM. Residues serine 618, serine 640, and serine 648 each carry the phosphoserine modification. Positions 643–653 are enriched in acidic residues; that stretch reads IEVDDSDEDDI. The segment covering 655–679 has biased composition (polar residues); that stretch reads PTNSRADQRWSGTTSSKRMSQSQTA. Residue lysine 671 is modified to N6-lactoyllysine. Serine 674, serine 676, serine 686, and serine 699 each carry phosphoserine. Residues 684–694 show a composition bias toward acidic residues; the sequence is FESDEDDDDDP.

The protein belongs to the MRE11/RAD32 family. Component of the MRN complex composed of two heterodimers RAD50 and MRE11 associated with a single NBN. The MRN complexes dimerize on DNA to form joined MRN-MRN oligomers required for DNA double-strand break repair. As part of the MRN complex, interacts with MCM9; the interaction recruits the complex to DNA repair sites. Component of the BASC complex, at least composed of BRCA1, MSH2, MSH6, MLH1, ATM, BLM, RAD50, MRE11 and NBN. Found in a complex with TERF2. Interacts with DCLRE1C/Artemis and DCLRE1B/Apollo. Interacts with ATF2. Interacts with EXD2. Interacts with MRNIP. Interacts with SAMHD1; leading to stimulate 3'-5' exonuclease activity. Interacts (when ubiquitinated) with UBQLN4 (via its UBA domain). Interacts with CYREN (via XLF motif). Interacts with GFI1; promoting methylation by PRMT1. Interacts with DYNLL1; inhibiting the activity of MRE11. Interacts with C1QBP and RAD50; interaction takes place in absence of DNA damage to form the MRC (MRE11-RAD50-C1QBP) complex that inhibits the activity of MRE11. Interacts with AGER/RAGE; AGER is recruited to DNA double-strand break sites where it enhances MRE11 endonuclease activity to promote DNA repair. The cofactor is Mn(2+). Post-translationally, phosphorylated by ATM at Ser-674 and Ser-676 in response to DNA damage, promoting MRE11 activity: phosphorylation activates MRE11 by preventing the interaction between MRE11 and the C1QBP inhibitor. Phosphorylation at Ser-648 by PLK1 primes for phosphorylation at Ser-686 by CK2, inhibiting recruitment of the MRN complex to DNA damage sites. In terms of processing, asymmetric dimethylation by PRMT1 promotes MRE11 exonuclease activity. Lactylation at Lys-671 by CREBBP/CBP in response to DNA damage promotes DNA binding and MRE11 activity. Post-translationally, acetylated on lysine residues by KAT2A /GCN5. In terms of processing, ubiquitinated following DNA damage. Ubiquitination triggers interaction with UBQLN4, leading to MRE11 removal from chromatin and degradation by the proteasome. Ubiquitinated at Lys-339 and Lys-481 by RNF126 via 'Lys-27'- and 'Lys-29'-linked polyubiquitin chains, promoting the exonuclease activity of MRE11. SUMOylated by PIAS1, stabilizing MRE11 on chromatin during end resection. DeSUMOylated by SENP3 following removal from DNA double-strand breaks (DSBs). Post-translationally, ufmylation at Lys-282 promotes MRE11 activity and is required for activation of the ATM and ATR kinases by the MRN complex.

The protein resides in the nucleus. It is found in the chromosome. Its subcellular location is the telomere. Interaction with SAMHD1 stimulates the double-strand-specific 3'-5' exonuclease activity. RBBP8/CtIP specifically promotes the endonuclease activity to clear protein-DNA adducts and generate clean double-strand break ends. DYNLL1-binding inhibits the activity of MRE11. MRE11 activity is inhibited by C1QBP: in absence of DNA damage, C1QBP interacts with unphosphorylated MRE11, preventing formation and activity of the MRN complex. Core component of the MRN complex, which plays a central role in double-strand break (DSB) repair, DNA recombination, maintenance of telomere integrity and meiosis. The MRN complex is involved in the repair of DNA double-strand breaks (DSBs) via homologous recombination (HR), an error-free mechanism which primarily occurs during S and G2 phases. The complex (1) mediates the end resection of damaged DNA, which generates proper single-stranded DNA, a key initial steps in HR, and is (2) required for the recruitment of other repair factors and efficient activation of ATM and ATR upon DNA damage. Within the MRN complex, MRE11 possesses both single-strand endonuclease activity and double-strand-specific 3'-5' exonuclease activity. After DSBs, MRE11 is loaded onto DSBs sites and cleaves DNA by cooperating with RBBP8/CtIP to initiate end resection. MRE11 first endonucleolytically cleaves the 5' strand at DNA DSB ends to prevent non-homologous end joining (NHEJ) and licence HR. It then generates a single-stranded DNA gap via 3' to 5' exonucleolytic degradation to create entry sites for EXO1- and DNA2-mediated 5' to 3' long-range resection, which is required for single-strand invasion and recombination. RBBP8/CtIP specifically promotes the endonuclease activity of MRE11 to clear protein-DNA adducts and generate clean double-strand break ends. MRE11 endonuclease activity is also enhanced by AGER/RAGE. The MRN complex is also required for DNA damage signaling via activation of the ATM and ATR kinases: the nuclease activity of MRE11 is not required to activate ATM and ATR. The MRN complex is also required for the processing of R-loops. The MRN complex is involved in the activation of the cGAS-STING pathway induced by DNA damage during tumorigenesis: the MRN complex acts by displacing CGAS from nucleosome sequestration, thereby activating it. In telomeres the MRN complex may modulate t-loop formation. The sequence is that of Double-strand break repair protein MRE11 from Mus musculus (Mouse).